A 599-amino-acid chain; its full sequence is MSGPCGEKPVLEASPTMSLWEFEDSHSRQGTPRPGQELAAEEASALELQMKVDFFRKLGYSSTEIHSVLQKLGVQADTNTVLGELVKHGTATERERQTSPDPCPQLPLVPRGGGTPKAPNLEPPLPEEEKEGSDLRPVVIDGSNVAMSHGNKEVFSCRGILLAVNWFLERGHTDITVFVPSWRKEQPRPDVPITDQHILRELEKKKILVFTPSRRVGGKRVVCYDDRFIVKLAYESDGIVVSNDTYRDLQGERQEWKRFIEERLLMYSFVNDKFMPPDDPLGRHGPSLDNFLRKKPLTLEHRKQPCPYGRKCTYGIKCRFFHPERPSCPQRSVADELRANALLSPPRAPSKDKNGRRPSPSSQSSSLLTESEQCSLDGKKLGAQASPGSRQEGLTQTYAPSGRSLAPSGGSGSSFGPTDWLPQTLDSLPYVSQDCLDSGIGSLESQMSELWGVRGGGPGEPGPPRAPYTGYSPYGSELPATAAFSAFGRAMGAGHFSVPADYPPAPPAFPPREYWSEPYPLPPPTSVLQEPPVQSPGAGRSPWGRAGSLAKEQASVYTKLCGVFPPHLVEAVMGRFPQLLDPQQLAAEILSYKSQHPSE.

A disordered region spans residues 1–40 (MSGPCGEKPVLEASPTMSLWEFEDSHSRQGTPRPGQELAA). Residues 42-87 (EASALELQMKVDFFRKLGYSSTEIHSVLQKLGVQADTNTVLGELVK) are ubiquitin association domain. The segment at 81-150 (VLGELVKHGT…DGSNVAMSHG (70 aa)) is necessary for interaction with TANK. Residues 90 to 133 (TATERERQTSPDPCPQLPLVPRGGGTPKAPNLEPPLPEEEKEGS) are disordered. The residue at position 99 (Ser-99) is a Phosphoserine. Residues 112–297 (GGGTPKAPNL…LDNFLRKKPL (186 aa)) are RNase. The 156-residue stretch at 135–290 (LRPVVIDGSN…LGRHGPSLDN (156 aa)) folds into the RNase NYN domain. Positions 214-220 (RRVGGKR) are RNA binding. Asp-226 contacts Mg(2+). The C3H1-type zinc finger occupies 301-324 (HRKQPCPYGRKCTYGIKCRFFHPE). The necessary for interaction with ZC3H12D stretch occupies residues 301–457 (HRKQPCPYGR…SELWGVRGGG (157 aa)). Residues 343-420 (LSPPRAPSKD…SGSSFGPTDW (78 aa)) are disordered. The residue at position 344 (Ser-344) is a Phosphoserine. The segment covering 358 to 375 (PSPSSQSSSLLTESEQCS) has biased composition (low complexity). Over residues 386-399 (SPGSRQEGLTQTYA) the composition is skewed to polar residues. Ser-438 and Ser-442 each carry phosphoserine. The interval 522 to 546 (PPPTSVLQEPPVQSPGAGRSPWGRA) is disordered.

The protein belongs to the ZC3H12 family. In terms of assembly, oligomer. Found in a deubiquitination complex with TANK, USP10 and ZC3H12A; this complex inhibits genotoxic stress- or interleukin-1-beta-mediated NF-kappaB activation by promoting IKBKG or TRAF6 deubiquitination. Interacts with IKBKG; this interaction increases in response to DNA damage. Interacts with TANK; this interaction increases in response to DNA damage and serves as a bridge to anchor both TANK and USP10 into a deubiquitinating complex. Interacts with TRAF6; this interaction increases in response to DNA damage and is stimulated by TANK. Interacts with USP10; this interaction increases in response to DNA damage and serves as a bridge to anchor both TANK and USP10 into a deubiquitinating complex. Interacts with ZC3H12D. Interacts with TNRC6A. Interacts with IKBKB/IKKB. Interacts with IKBKB/IKKB. Interacts with BTRC; the interaction occurs when ZC3H12A is phosphorylated in a IKBKB/IKKB-dependent manner. Interacts with IRAK1; this interaction increases the interaction between ZC3H12A and IKBKB/IKKB. Interacts with UPF1; this interaction occurs in a mRNA translationally active- and termination-dependent manner and is essential for ZC3H12A-mediated degradation of target mRNAs. Associates with ribosomes. Interacts with ubiquitin. (Microbial infection) Oligomerization is necessary for antiviral activity. Mg(2+) is required as a cofactor. Phosphorylated by IRAK1; phosphorylation is necessary for subsequent phosphorylation by the I-kappa-B-kinase (IKK) complex. Phosphorylated by I-kappa-B-kinase (IKK) subunits IKBKB/IKKB and CHUK/IKKA at Ser-438 and Ser-442; these phosphorylations promote ubiquitin proteasome-mediated degradation of ZC3H12A and hence facilitates rapid and robust production of IL-6 mRNA in response to toll-like receptor (TLR) or IL-1 receptor stimuli. Post-translationally, (Microbial infection) Rapidly degraded in activated T-cells in response to phorbol 13-acetate 12-myristate (PMA) during HIV-1 viral infection. In terms of processing, ubiquitinated; ubiquitination is induced in response to interleukin IL1 receptor stimuli in a IKBKB/IKKB and IRAK1-dependent manner, leading to proteasome-mediated degradation. Proteolytically cleaved between Arg-111 and Arg-214 by MALT1 in activated T-cells; cleavage at Arg-111 is critical for promoting ZC3H12A degradation in response to T-cell receptor (TCR) stimulation, and hence is necessary for prolonging the stability of a set of mRNAs controlling T-cell activation and Th17 cell differentiation. As to expression, expressed in heart, placenta, spleen, kidney, liver and lung. Expressed in leukocytes. Expressed in monocyte.

Its subcellular location is the nucleus. It localises to the cytoplasm. It is found in the P-body. The protein localises to the rough endoplasmic reticulum membrane. The protein resides in the cytoplasmic granule. Endoribonuclease involved in various biological functions such as cellular inflammatory response and immune homeostasis, glial differentiation of neuroprogenitor cells, cell death of cardiomyocytes, adipogenesis and angiogenesis. Functions as an endoribonuclease involved in mRNA decay. Modulates the inflammatory response by promoting the degradation of a set of translationally active cytokine-induced inflammation-related mRNAs, such as IL6 and IL12B, during the early phase of inflammation. Prevents aberrant T-cell-mediated immune reaction by degradation of multiple mRNAs controlling T-cell activation, such as those encoding cytokines (IL6 and IL2), cell surface receptors (ICOS, TNFRSF4 and TNFR2) and transcription factor (REL). Inhibits cooperatively with ZC3H12A the differentiation of helper T cells Th17 in lungs. They repress target mRNA encoding the Th17 cell-promoting factors IL6, ICOS, REL, IRF4, NFKBID and NFKBIZ. The cooperation requires RNA-binding by RC3H1 and the nuclease activity of ZC3H12A. Together with RC3H1, destabilizes TNFRSF4/OX40 mRNA by binding to the conserved stem loop structure in its 3'UTR. Self regulates by destabilizing its own mRNA. Cleaves mRNA harboring a stem-loop (SL), often located in their 3'-UTRs, during the early phase of inflammation in a helicase UPF1-dependent manner. Plays a role in the inhibition of microRNAs (miRNAs) biogenesis. Cleaves the terminal loop of a set of precursor miRNAs (pre-miRNAs) important for the regulation of the inflammatory response leading to their degradation, and thus preventing the biosynthesis of mature miRNAs. Also plays a role in promoting angiogenesis in response to inflammatory cytokines by inhibiting the production of antiangiogenic microRNAs via its anti-dicer RNase activity. Affects the overall ubiquitination of cellular proteins. Positively regulates deubiquitinase activity promoting the cleavage at 'Lys-48'- and 'Lys-63'-linked polyubiquitin chains on TNF receptor-associated factors (TRAFs), preventing JNK and NF-kappa-B signaling pathway activation, and hence negatively regulating macrophage-mediated inflammatory response and immune homeostasis. Also induces deubiquitination of the transcription factor HIF1A, probably leading to its stabilization and nuclear import, thereby positively regulating the expression of proangiogenic HIF1A-targeted genes. Involved in a TANK-dependent negative feedback response to attenuate NF-kappaB activation through the deubiquitination of IKBKG or TRAF6 in response to interleukin-1-beta (IL1B) stimulation or upon DNA damage. Prevents stress granule (SGs) formation and promotes macrophage apoptosis under stress conditions, including arsenite-induced oxidative stress, heat shock and energy deprivation. Plays a role in the regulation of macrophage polarization; promotes IL4-induced polarization of macrophages M1 into anti-inflammatory M2 state. May also act as a transcription factor that regulates the expression of multiple genes involved in inflammatory response, angiogenesis, adipogenesis and apoptosis. Functions as a positive regulator of glial differentiation of neuroprogenitor cells through an amyloid precursor protein (APP)-dependent signaling pathway. Attenuates septic myocardial contractile dysfunction in response to lipopolysaccharide (LPS) by reducing I-kappa-B-kinase (IKK)-mediated NF-kappa-B activation, and hence myocardial pro-inflammatory cytokine production. Functionally, (Microbial infection) Binds to Japanese encephalitis virus (JEV) and Dengue virus (DEN) RNAs. In terms of biological role, (Microbial infection) Exhibits antiviral activity against HIV-1 in lymphocytes by decreasing the abundance of HIV-1 viral RNA species. In Homo sapiens (Human), this protein is Endoribonuclease ZC3H12A.